Here is a 569-residue protein sequence, read N- to C-terminus: ATP-dependent RNA helicase dhh1 (569 aa).

Over residues 1–16 the composition is skewed to polar residues; the sequence is MSDQLADQLKATSLSS. The segment at 1–39 is disordered; the sequence is MSDQLADQLKATSLSSGPEDWKKGLNLPARDTRQQTEDV. Residues 45–73 carry the Q motif motif; sequence LDWEDFIHDRDLLMGIFEAGFEKPSPIQE. A Helicase ATP-binding domain is found at 76-246; the sequence is IPVALTGRDI…DKNMTSPYEI (171 aa). 89–96 is a binding site for ATP; the sequence is AKNGTGKT. The DEAD box signature appears at 194–197; sequence DEAD. In terms of domain architecture, Helicase C-terminal spans 256–416; the sequence is GITQYYAFVE…PIPQTIDKSL (161 aa). Positions 436 to 569 are disordered; sequence AQQPQQQLQQ…GQPQGPLSAQ (134 aa). Over residues 437-482 the composition is skewed to low complexity; it reads QQPQQQLQQSQRPQQSQQQQHFSTQTQPSNQLPPQQGNQQLGFNPQ. A compositionally biased stretch (polar residues) spans 495-520; it reads GDWQGQNGRQNGTGASNNQPRPTNYQ. Positions 529–542 are enriched in gly residues; that stretch reads SRGGRGRGFQGQGG. Positions 543–569 are enriched in low complexity; that stretch reads RQNQNYGGQRGPRTQGQGQPQGPLSAQ.

Belongs to the DEAD box helicase family. DDX6/DHH1 subfamily.

The protein localises to the cytoplasm. The protein resides in the P-body. It catalyses the reaction ATP + H2O = ADP + phosphate + H(+). In terms of biological role, ATP-dependent RNA helicase involved in mRNA turnover, and more specifically in mRNA decapping. Is involved in G1/S DNA-damage checkpoint recovery, probably through the regulation of the translational status of a subset of mRNAs. May also have a role in translation and mRNA nuclear export. The chain is ATP-dependent RNA helicase dhh1 (drh-10) from Neurospora crassa (strain ATCC 24698 / 74-OR23-1A / CBS 708.71 / DSM 1257 / FGSC 987).